We begin with the raw amino-acid sequence, 280 residues long: MTARIDAAFARCRAEGRAALVTYVMAGDPDPETSLKVLEALPKAGADIVEFGLPFTDPMADGPAIQAAGLRALKAGQDLRGTLALVRRFREGDDRTPVVLMGYYNPIHTYGVPHFLEDAQAAGIDGLIVVDLPPEEDEELCLPALEKGLAFIRLATPTTDEARLPAVLANTAGFVYYVSITGVTGTATPDFGRVSQAVSRITAHTNLPVVVGFGVKTGAHAAEIARGADGVVVGSALVDALARSLEPGDRAGSGTVEAVTSLVRELAQGVRSTAKAPAGA.

Catalysis depends on proton acceptor residues Glu50 and Asp61.

The protein belongs to the TrpA family. Tetramer of two alpha and two beta chains.

It carries out the reaction (1S,2R)-1-C-(indol-3-yl)glycerol 3-phosphate + L-serine = D-glyceraldehyde 3-phosphate + L-tryptophan + H2O. Its pathway is amino-acid biosynthesis; L-tryptophan biosynthesis; L-tryptophan from chorismate: step 5/5. Functionally, the alpha subunit is responsible for the aldol cleavage of indoleglycerol phosphate to indole and glyceraldehyde 3-phosphate. In Methylorubrum extorquens (strain PA1) (Methylobacterium extorquens), this protein is Tryptophan synthase alpha chain.